Consider the following 168-residue polypeptide: MAEAFRGEYNQKVDAKARVSIPAPFRRVIEAGDPKFSGGRSSFVLVYGGDRSYVECYTISEMERIEERIRSLPMGTPKRRYLERNMITLALNMELDEDGRIVLPPKGREKLGISPDELKGGTEATFAGTLNKFQIWKADIYAAELAAEEEVLLPPGADMLSLLEETGL.

2 consecutive SpoVT-AbrB domains span residues 8 to 51 (EYNQ…GGDR) and 90 to 140 (ALNM…KADI).

Belongs to the MraZ family. As to quaternary structure, forms oligomers.

Its subcellular location is the cytoplasm. It localises to the nucleoid. This chain is Transcriptional regulator MraZ, found in Cereibacter sphaeroides (strain KD131 / KCTC 12085) (Rhodobacter sphaeroides).